Consider the following 177-residue polypeptide: DELTA-stichotoxin-Hmg2b (177 aa).

The tract at residues 3-12 (ALAGTIIAGA) is plays an important role in the hemolytic activity. Residues 11–30 (GASLGFQILDKVLGELGKVS) form an N-terminal region region. Residues Ser54, Val87, Ser105, Pro107, Tyr133, Tyr137, and Tyr138 each coordinate phosphocholine.

It belongs to the actinoporin family. Sea anemone subfamily. In terms of assembly, octamer or nonamer in membranes. Monomer in the soluble state.

The protein localises to the secreted. It is found in the nematocyst. It localises to the target cell membrane. Pore-forming protein that forms cations-selective hydrophilic pores of around 1 nm and causes cytolysis. Pore formation is a multi-step process that involves specific recognition of membrane sphingomyelin (but neither cholesterol nor phosphatidylcholine) using aromatic rich region and adjacent phosphocholine (POC) binding site, firm binding to the membrane (mainly driven by hydrophobic interactions) accompanied by the transfer of the N-terminal region to the lipid-water interface and finally pore formation after oligomerization of monomers This toxin shows hemolytic activity. The chain is DELTA-stichotoxin-Hmg2b from Heteractis magnifica (Magnificent sea anemone).